Consider the following 447-residue polypeptide: Probable glycosyltransferase 7 (447 aa).

The interval 1–31 (MRATTGARHLHPPWRRGLRHHRQSTMPPRAS) is disordered. Residues 1–37 (MRATTGARHLHPPWRRGLRHHRQSTMPPRASRGRLAD) lie on the Cytoplasmic side of the membrane. Over residues 8–23 (RHLHPPWRRGLRHHRQ) the composition is skewed to basic residues. Residues 38 to 60 (AALFTAGAVLGSVLLLTLASPFS) traverse the membrane as a helical; Signal-anchor for type II membrane protein segment. Over 61-447 (SSSSPSSGVG…LPFDHPTQTA (387 aa)) the chain is Lumenal. 2 N-linked (GlcNAc...) asparagine glycosylation sites follow: N285 and N329.

This sequence belongs to the glycosyltransferase 34 family.

It is found in the golgi apparatus membrane. Its function is as follows. Probable glycosyltransferase that may be involved in the biosynthesis of xyloglucan. In Oryza sativa subsp. indica (Rice), this protein is Probable glycosyltransferase 7.